The following is a 253-amino-acid chain: Phosphate import ATP-binding protein PstB (253 aa).

In terms of domain architecture, ABC transporter spans 5–248 (IETVNLNVYY…PEHELTEKYV (244 aa)). An ATP-binding site is contributed by 37–44 (GPSGCGKS).

This sequence belongs to the ABC transporter superfamily. Phosphate importer (TC 3.A.1.7) family. In terms of assembly, the complex is composed of two ATP-binding proteins (PstB), two transmembrane proteins (PstC and PstA) and a solute-binding protein (PstS).

The protein localises to the cell membrane. It catalyses the reaction phosphate(out) + ATP + H2O = ADP + 2 phosphate(in) + H(+). Functionally, part of the ABC transporter complex PstSACB involved in phosphate import. Responsible for energy coupling to the transport system. The sequence is that of Phosphate import ATP-binding protein PstB from Thermococcus kodakarensis (strain ATCC BAA-918 / JCM 12380 / KOD1) (Pyrococcus kodakaraensis (strain KOD1)).